Consider the following 472-residue polypeptide: Methanethiol oxidase (472 aa).

At Ala-2 the chain carries N-acetylalanine. 2 positions are modified to phosphoserine: Ser-111 and Ser-467.

This sequence belongs to the selenium-binding protein family. Interacts with USP33. The N-terminus is blocked. Highly expressed in liver, kidney and, to a lesser extent, lung.

Its subcellular location is the nucleus. It localises to the cytoplasm. It is found in the cytosol. The protein localises to the membrane. It carries out the reaction methanethiol + O2 + H2O = hydrogen sulfide + formaldehyde + H2O2 + H(+). Its pathway is organosulfur degradation. Functionally, catalyzes the oxidation of methanethiol, an organosulfur compound known to be produced in substantial amounts by gut bacteria. Selenium-binding protein which may be involved in the sensing of reactive xenobiotics in the cytoplasm. May be involved in intra-Golgi protein transport. The polypeptide is Methanethiol oxidase (Selenbp1) (Mus musculus (Mouse)).